We begin with the raw amino-acid sequence, 122 residues long: UPF0102 protein XOO3839 (122 aa).

This sequence belongs to the UPF0102 family.

This Xanthomonas oryzae pv. oryzae (strain KACC10331 / KXO85) protein is UPF0102 protein XOO3839.